A 190-amino-acid polypeptide reads, in one-letter code: Biphenyl-2,3-diol 1,2-dioxygenase 3 (190 aa).

The VOC domain maps to 6 to 125 (RLAHFVLQTN…DGNMVELQID (120 aa)). His-9, His-73, and Glu-121 together coordinate Fe cation.

Belongs to the extradiol ring-cleavage dioxygenase family. As to quaternary structure, homohexamer. Fe(2+) is required as a cofactor.

It carries out the reaction biphenyl-2,3-diol + O2 = 2-hydroxy-6-oxo-6-phenylhexa-2,4-dienoate + H(+). It functions in the pathway xenobiotic degradation; biphenyl degradation; 2-hydroxy-2,4-pentadienoate and benzoate from biphenyl: step 3/4. In Rhodococcus globerulus, this protein is Biphenyl-2,3-diol 1,2-dioxygenase 3 (bphC3).